A 442-amino-acid chain; its full sequence is Exodeoxyribonuclease 7 large subunit (442 aa).

The interval 1–38 (MSDSTQFSLFDSGDDEPAKVTAPKRKVARKKRSSSSSD) is disordered. Over residues 22–33 (APKRKVARKKRS) the composition is skewed to basic residues.

The protein belongs to the XseA family. In terms of assembly, heterooligomer composed of large and small subunits.

The protein localises to the cytoplasm. The enzyme catalyses Exonucleolytic cleavage in either 5'- to 3'- or 3'- to 5'-direction to yield nucleoside 5'-phosphates.. Bidirectionally degrades single-stranded DNA into large acid-insoluble oligonucleotides, which are then degraded further into small acid-soluble oligonucleotides. The chain is Exodeoxyribonuclease 7 large subunit from Rhodopirellula baltica (strain DSM 10527 / NCIMB 13988 / SH1).